Consider the following 289-residue polypeptide: tRNA dimethylallyltransferase (289 aa).

Residue 9–16 (GTTASGKT) coordinates ATP. Residue 11 to 16 (TASGKT) participates in substrate binding. The interaction with substrate tRNA stretch occupies residues 34 to 37 (DSLC).

This sequence belongs to the IPP transferase family. As to quaternary structure, monomer. Mg(2+) serves as cofactor.

It catalyses the reaction adenosine(37) in tRNA + dimethylallyl diphosphate = N(6)-dimethylallyladenosine(37) in tRNA + diphosphate. Functionally, catalyzes the transfer of a dimethylallyl group onto the adenine at position 37 in tRNAs that read codons beginning with uridine, leading to the formation of N6-(dimethylallyl)adenosine (i(6)A). The chain is tRNA dimethylallyltransferase from Campylobacter jejuni subsp. jejuni serotype O:23/36 (strain 81-176).